Consider the following 121-residue polypeptide: NADH-quinone oxidoreductase subunit A 1 (121 aa).

The next 3 membrane-spanning stretches (helical) occupy residues 6 to 26 (FPIFVVISIAIILAVVLLSIG), 62 to 82 (LVAMIFIVFDIEVIFMYPWAV), and 90 to 110 (FYGLIPMVTFVLILLAGYYYI).

Belongs to the complex I subunit 3 family. In terms of assembly, NDH-1 is composed of 14 different subunits. Subunits NuoA, H, J, K, L, M, N constitute the membrane sector of the complex.

Its subcellular location is the cell inner membrane. It carries out the reaction a quinone + NADH + 5 H(+)(in) = a quinol + NAD(+) + 4 H(+)(out). NDH-1 shuttles electrons from NADH, via FMN and iron-sulfur (Fe-S) centers, to quinones in the respiratory chain. The immediate electron acceptor for the enzyme in this species is believed to be a menaquinone. Couples the redox reaction to proton translocation (for every two electrons transferred, four hydrogen ions are translocated across the cytoplasmic membrane), and thus conserves the redox energy in a proton gradient. This Chloroherpeton thalassium (strain ATCC 35110 / GB-78) protein is NADH-quinone oxidoreductase subunit A 1.